The sequence spans 371 residues: Putrescine N-methyltransferase 2 (371 aa).

2 stretches are compositionally biased toward polar residues: residues 1 to 14 and 23 to 70; these read MEVISTNTNGSTIF and GHQN…HDNG. Positions 1–70 are disordered; it reads MEVISTNTNG…QNGTISHDNG (70 aa). Residues 82–319 form the PABS domain; sequence PGWFSEFSAL…GVIGYMLCST (238 aa). Residues Gln-113, Glu-188, and 219 to 220 each bind S-adenosyl-L-methionine; that span reads DG. Asp-238 serves as the catalytic Proton acceptor. Tyr-307 contacts S-adenosyl-L-methionine.

Belongs to the class I-like SAM-binding methyltransferase superfamily. Spermidine/spermine synthase family. As to expression, mainly expressed in roots.

It carries out the reaction putrescine + S-adenosyl-L-methionine = N-methylputrescine + S-adenosyl-L-homocysteine + H(+). Its pathway is alkaloid biosynthesis; nicotine biosynthesis. Functionally, involved in the biosynthesis of pyridine alkaloid natural products, leading mainly to the production of anabasine, anatabine, nicotine and nornicotine, effective deterrents against herbivores with antiparasitic and pesticide properties (neurotoxins); nornicotine serves as the precursor in the synthesis of the carcinogen compound N'-nitrosonornicotine (NNN). Methyltransferase that mediates the conversion of putrescine to N-methylputrescine. This chain is Putrescine N-methyltransferase 2, found in Nicotiana attenuata (Coyote tobacco).